The sequence spans 107 residues: uncharacterized protein (107 aa).

The helical transmembrane segment at 62 to 79 (LLVVIVYYFSHVGSFSLA) threads the bilayer.

It localises to the nucleus membrane. This is an uncharacterized protein from Schizosaccharomyces pombe (strain 972 / ATCC 24843) (Fission yeast).